The chain runs to 2111 residues: Fatty acid synthase beta subunit aflB (2111 aa).

The acetyltransferase (AT) domain stretch occupies residues 200–565 (IVTVFNGQGV…KAGTAARVIL (366 aa)). The enoyl reductase (ER) domain stretch occupies residues 618 to 863 (SRALGLPPVM…AIVDTPGVPD (246 aa)). The interval 1195 to 1688 (GTKPSWRKAL…SPGETLLVDI (494 aa)) is dehydratase (DH) domain. The MaoC-like domain maps to 1606–1708 (EMPTSSDQYA…IVVATARSES (103 aa)). Residues 1727 to 2091 (YLFTGQGSQK…FENVLAISES (365 aa)) are malonyl/palmitoyl transferase (MT/PT) domain.

It belongs to the fungal fatty acid synthetase subunit beta family. In terms of assembly, [Alpha(6)beta(6)] hexamers of two multifunctional subunits (alpha and beta).

It catalyses the reaction acetyl-CoA + n malonyl-CoA + 2n NADPH + 4n H(+) = a long-chain-acyl-CoA + n CoA + n CO2 + 2n NADP(+).. The enzyme catalyses holo-[ACP] + acetyl-CoA = acetyl-[ACP] + CoA. The catalysed reaction is holo-[ACP] + malonyl-CoA = malonyl-[ACP] + CoA. It carries out the reaction a (3R)-hydroxyacyl-[ACP] = a (2E)-enoyl-[ACP] + H2O. It catalyses the reaction a 2,3-saturated acyl-[ACP] + NAD(+) = a (2E)-enoyl-[ACP] + NADH + H(+). The enzyme catalyses (9Z)-octadecenoyl-[ACP] + H2O = (9Z)-octadecenoate + holo-[ACP] + H(+). The protein operates within secondary metabolite biosynthesis. Functionally, fatty acid synthase beta subunit; part of the gene cluster that mediates the biosynthesis of aspercryptins, linear lipopeptides built from six amino acids including 2 highly unusual and nonproteogenic amino acids, 2-amino-octanoic acid (2aoa) and 2-amino-dodecanol (2adol). The core structure of aspercryptins is as follows: Ser/Ala-Thr-Ile/Val-2aoa-Asn-2adol. The first step of aspercryptin biosynthesis is the generation of the fatty acid precursors, octanoic and dodecanoic acids, by the FAS subunits atnF and atnM. The fatty acid precursors are likely transformed into the corresponding alpha-amino fatty acids in three steps. First, they are hydroxylated by the cytochrome P450 monooxygenase atnE, then oxidized to the corresponding alpha-keto acids by the NAD(P)-dependent oxidoreductase atnD, and finally converted to the alpha-amino fatty acids by the PLP-dependent aminotransferases atnH or atnJ. the alpha-amino fatty acids, 2-amino-octanoic and 2-amino-dodecanoic acids, are recognized, activated, and covalently tethered to the NRPS atnA by its fourth and sixth adenylation domains. The second module of atnA is the Thr module and contains an epimerase (E) domain responsible for the epimerization of Thr to D-allo-Thr. Additionally, despite atnA having only one epimerase domain, the first amino acid of aspercryptin A1 is D-Ser, suggesting that serine is either loaded directly as D-Ser on the first module or that the epimerase domain in the threonine module epimerizes both L-Ser and L-Thr. After condensation of the hexapeptide of aspercryptin, the C-terminal reductase (TE) domain might be involved in the reductive release and production of the aldehyde hexapeptide. Further reduction would generate aspercryptins. The variety of aspercryptins produced reflects the flexibility of the atnA NRPS, allowing incorporation of alanine instead of serine, valine for isoleucine, and a C10 fatty amino alcohol instead of the C12 version. AtnB seems to be involved in the selectivity for Ile versus Val by the third module. Moreover, type B, C and D aspercryptins have an additional N-terminal cichorine, acetyl and propionyl group respectively. In Emericella nidulans (strain FGSC A4 / ATCC 38163 / CBS 112.46 / NRRL 194 / M139) (Aspergillus nidulans), this protein is Fatty acid synthase beta subunit aflB.